Here is a 421-residue protein sequence, read N- to C-terminus: Inhibitor of growth protein 3 (421 aa).

The interval 129–163 (PSQPVNNHHAHSHTPVEKRKYNPTSHHAAADHIPE) is disordered. Residues Lys148, Lys165, and Lys167 each participate in a glycyl lysine isopeptide (Lys-Gly) (interchain with G-Cter in SUMO2) cross-link. Lys181 bears the N6-acetyllysine mark. A Glycyl lysine isopeptide (Lys-Gly) (interchain with G-Cter in SUMO2) cross-link involves residue Lys256. An N6-acetyllysine modification is found at Lys264. Polar residues predominate over residues 286–296 (TQNASSSATDS). A disordered region spans residues 286–323 (TQNASSSATDSRSGRKSKNNTKSSSQQSSSSSSSSSSS). Over residues 308–323 (SSSQQSSSSSSSSSSS) the composition is skewed to low complexity. Residues 363-412 (PRYCICNQVSYGEMVGCDNQDCPIEWFHYGCVGLTEAPKGKWFCPQCTAA) form a PHD-type zinc finger. Zn(2+) is bound by residues Cys366, Cys368, Cys379, Cys384, His390, Cys393, Cys406, and Cys409.

This sequence belongs to the ING family. As to quaternary structure, interacts with H3K4me3 and to a lesser extent with H3K4me2. Component of the NuA4 histone acetyltransferase complex which contains the catalytic subunit KAT5/TIP60 and the subunits EP400, TRRAP/PAF400, BRD8/SMAP, EPC1, DMAP1/DNMAP1, RUVBL1/TIP49, RUVBL2, ING3, actin, ACTL6A/BAF53A, MORF4L1/MRG15, MORF4L2/MRGX, MRGBP, YEATS4/GAS41, VPS72/YL1 and MEAF6. The NuA4 complex interacts with MYC. HTATTIP/TIP60, EPC1, and ING3 together constitute a minimal HAT complex termed Piccolo NuA4. Component of a SWR1-like complex.

The protein resides in the nucleus. Component of the NuA4 histone acetyltransferase (HAT) complex which is involved in transcriptional activation of select genes principally by acetylation of nucleosomal histones H4 and H2A. This modification may both alter nucleosome - DNA interactions and promote interaction of the modified histones with other proteins which positively regulate transcription. This complex may be required for the activation of transcriptional programs associated with oncogene and proto-oncogene mediated growth induction, tumor suppressor mediated growth arrest and replicative senescence, apoptosis, and DNA repair. NuA4 may also play a direct role in DNA repair when directly recruited to sites of DNA damage. Component of a SWR1-like complex that specifically mediates the removal of histone H2A.Z/H2AZ1 from the nucleosome. In Mus musculus (Mouse), this protein is Inhibitor of growth protein 3 (Ing3).